The primary structure comprises 537 residues: Frizzled-4 (537 aa).

The signal sequence occupies residues 1–36 (MAWRGAGPSVPGAPGGVGLSLGLLLQLLLLLGPARG). Over 37–212 (FGDEEERRCD…KCGYDAGLYS (176 aa)) the chain is Extracellular. In terms of domain architecture, FZ spans 40–161 (EEERRCDPIR…NDHNHMCMEG (122 aa)). 8 disulfide bridges follow: Cys-45-Cys-106, Cys-53-Cys-99, Cys-90-Cys-128, Cys-117-Cys-158, Cys-121-Cys-145, Cys-181-Cys-200, Cys-204-Cys-282, and Cys-302-Cys-377. Residue Asn-59 is glycosylated (N-linked (GlcNAc...) asparagine). N-linked (GlcNAc...) asparagine glycosylation is present at Asn-144. Residues 213 to 243 (RSAKEFTDIWMAVWASLCFISTAFTVLTFLI) form a helical membrane-spanning segment. The Cytoplasmic portion of the chain corresponds to 244–249 (DSSRFS). Residues 250–275 (YPERPIIFLSMCYNIYSIAYIVRLTV) form a helical membrane-spanning segment. Residues 276–299 (GRERISCDFEEAAEPVLIQEGLKN) lie on the Extracellular side of the membrane. A helical membrane pass occupies residues 300–333 (TGCAIIFLLMYFFGMASSIWWVILTLTWFLAAGL). Over 334-336 (KWG) the chain is Cytoplasmic. A helical membrane pass occupies residues 337–365 (HEAIEMHSSYFHIAAWAIPAVKTIVILIM). Residues 366-383 (RLVDADELTGLCYVGNQN) lie on the Extracellular side of the membrane. The chain crosses the membrane as a helical span at residues 384–418 (LDALTGFVVAPLFTYLVIGTLFIAAGLVALFKIRS). The Cytoplasmic portion of the chain corresponds to 419 to 431 (NLQKDGTKTDKLE). Residues 432–460 (RLMVKIGVFSVLYTVPATCVIACYFYEIS) form a helical membrane-spanning segment. The Extracellular segment spans residues 461–473 (NWALFRYSADDSN). A helical transmembrane segment spans residues 474–495 (MAVEMLKIFMSLLVGITSGMWI). Topologically, residues 496–537 (WSAKTLHTWQKCSNRLVNSGKVKREKRGNGWVKPGKGSETVV) are cytoplasmic. The Lys-Thr-X-X-X-Trp motif, mediates interaction with the PDZ domain of Dvl family members motif lies at 499-504 (KTLHTW). The PDZ-binding signature appears at 535-537 (TVV).

Belongs to the G-protein coupled receptor Fz/Smo family. In terms of assembly, interacts with MAGI3 and NDP. Component of a complex, at least composed of TSPAN12, FZD4 and norrin (NDP). Interacts (via FZ domain) with TSKU; TSKU competes with WNT2B for binding to FZD4, inhibiting Wnt signaling and repressing peripheral eye development. Interacts with glypican GPC3. Post-translationally, ubiquitinated by ZNRF3, leading to its degradation by the proteasome. As to expression, almost ubiquitous. Largely expressed in adult heart, skeletal muscle, ovary, and fetal kidney. Moderate amounts in adult liver, kidney, pancreas, spleen, and fetal lung, and small amounts in placenta, adult lung, prostate, testis, colon, fetal brain and liver.

It localises to the cell membrane. In terms of biological role, receptor for Wnt proteins. Most frizzled receptors are coupled to the beta-catenin (CTNNB1) canonical signaling pathway, which leads to the activation of disheveled proteins, inhibition of GSK-3 kinase, nuclear accumulation of beta-catenin (CTNNB1) and activation of Wnt target genes. Plays a critical role in retinal vascularization by acting as a receptor for Wnt proteins and norrin (NDP). In retina, it can be activated by Wnt protein-binding and also by Wnt-independent signaling via binding of norrin (NDP), promoting in both cases beta-catenin (CTNNB1) accumulation and stimulation of LEF/TCF-mediated transcriptional programs. A second signaling pathway involving PKC and calcium fluxes has been seen for some family members, but it is not yet clear if it represents a distinct pathway or if it can be integrated in the canonical pathway, as PKC seems to be required for Wnt-mediated inactivation of GSK-3 kinase. Both pathways seem to involve interactions with G-proteins. May be involved in transduction and intercellular transmission of polarity information during tissue morphogenesis and/or in differentiated tissues. The protein is Frizzled-4 (FZD4) of Homo sapiens (Human).